Consider the following 379-residue polypeptide: Epoxyqueuosine reductase (379 aa).

Asp139 acts as the Proton donor in catalysis. Residues Ile181 to Thr213 enclose the 4Fe-4S ferredoxin-type domain. [4Fe-4S] cluster-binding residues include Cys193, Cys196, Cys199, Cys203, Cys219, Cys246, Cys249, and Cys253.

Belongs to the QueG family. As to quaternary structure, monomer. Cob(II)alamin is required as a cofactor. [4Fe-4S] cluster serves as cofactor.

The protein resides in the cytoplasm. The enzyme catalyses epoxyqueuosine(34) in tRNA + AH2 = queuosine(34) in tRNA + A + H2O. It participates in tRNA modification; tRNA-queuosine biosynthesis. Functionally, catalyzes the conversion of epoxyqueuosine (oQ) to queuosine (Q), which is a hypermodified base found in the wobble positions of tRNA(Asp), tRNA(Asn), tRNA(His) and tRNA(Tyr). This is Epoxyqueuosine reductase from Shigella dysenteriae serotype 1 (strain Sd197).